The primary structure comprises 1294 residues: uncharacterized protein (1294 aa).

This is an uncharacterized protein from Schizosaccharomyces pombe (strain 972 / ATCC 24843) (Fission yeast).